Reading from the N-terminus, the 336-residue chain is MKLSELLNAYSIETEFSNDFEVHALAELNKATPNDISYIDQARYLKLLKDSKAGAVFIRKKESSKVPKRMQALVVDNPHLAFAKASHAFKIPFFKNPESVNEPKHFERVTIMPNVVIGEGVEIGENSLIYPGVVIADGVKIGKNCILYPRVTLYQNTILEDNVTIHAGSVIGGDGFGYAHTALGEHVKIEHVGIVRIQKNVEIGANTAIDRAVFGETLIKEGVKIDNLVQIGHNCVLGEHSIVVSQVGLSGSTTTGRNVVFGGQVGIGGHLHVGEFTQIGGKSAVGKDLPPNTNFAGAIPAMEIHEWHHFLAHLRTNFRKQQKTSLLQKAKGFFKS.

The active-site Proton acceptor is the histidine 233.

Belongs to the transferase hexapeptide repeat family. LpxD subfamily. In terms of assembly, homotrimer.

The catalysed reaction is a UDP-3-O-[(3R)-3-hydroxyacyl]-alpha-D-glucosamine + a (3R)-hydroxyacyl-[ACP] = a UDP-2-N,3-O-bis[(3R)-3-hydroxyacyl]-alpha-D-glucosamine + holo-[ACP] + H(+). The protein operates within bacterial outer membrane biogenesis; LPS lipid A biosynthesis. Functionally, catalyzes the N-acylation of UDP-3-O-acylglucosamine using 3-hydroxyacyl-ACP as the acyl donor. Is involved in the biosynthesis of lipid A, a phosphorylated glycolipid that anchors the lipopolysaccharide to the outer membrane of the cell. This chain is UDP-3-O-acylglucosamine N-acyltransferase, found in Helicobacter pylori (strain ATCC 700392 / 26695) (Campylobacter pylori).